The following is a 216-amino-acid chain: Flavin prenyltransferase UbiX (216 aa).

Residues 9 to 11 (GAS), Ser-35, and Arg-144 each bind FMN. The dimethylallyl phosphate site is built by Tyr-174 and Arg-190.

It belongs to the UbiX/PAD1 family.

It catalyses the reaction dimethylallyl phosphate + FMNH2 = prenylated FMNH2 + phosphate. Functionally, flavin prenyltransferase that catalyzes the synthesis of the prenylated FMN cofactor (prenyl-FMN) for 4-hydroxy-3-polyprenylbenzoic acid decarboxylase UbiD. The prenyltransferase is metal-independent and links a dimethylallyl moiety from dimethylallyl monophosphate (DMAP) to the flavin N5 and C6 atoms of FMN. The protein is Flavin prenyltransferase UbiX of Streptomyces coelicolor (strain ATCC BAA-471 / A3(2) / M145).